The sequence spans 857 residues: DNA mismatch repair protein MutS (857 aa).

Residue 613-620 (GPNMGGKS) participates in ATP binding. The segment at 797–820 (TSLPHEQPAAHKAKDAPQVPHQSD) is disordered.

The protein belongs to the DNA mismatch repair MutS family.

This protein is involved in the repair of mismatches in DNA. It is possible that it carries out the mismatch recognition step. This protein has a weak ATPase activity. The chain is DNA mismatch repair protein MutS from Pseudomonas putida (strain ATCC 47054 / DSM 6125 / CFBP 8728 / NCIMB 11950 / KT2440).